We begin with the raw amino-acid sequence, 488 residues long: UDP-N-acetylmuramoyl-L-alanyl-D-glutamate--2,6-diaminopimelate ligase (488 aa).

Serine 31 is a UDP-N-acetyl-alpha-D-muramoyl-L-alanyl-D-glutamate binding site. Position 109–115 (109–115 (GTNGKTS)) interacts with ATP. UDP-N-acetyl-alpha-D-muramoyl-L-alanyl-D-glutamate-binding positions include asparagine 150, 151 to 152 (TT), serine 178, and arginine 186. N6-carboxylysine is present on lysine 218. Meso-2,6-diaminopimelate contacts are provided by residues arginine 384, 408–411 (DNPR), glycine 458, and glutamate 462. Positions 408 to 411 (DNPR) match the Meso-diaminopimelate recognition motif motif.

The protein belongs to the MurCDEF family. MurE subfamily. Mg(2+) is required as a cofactor. In terms of processing, carboxylation is probably crucial for Mg(2+) binding and, consequently, for the gamma-phosphate positioning of ATP.

It localises to the cytoplasm. The catalysed reaction is UDP-N-acetyl-alpha-D-muramoyl-L-alanyl-D-glutamate + meso-2,6-diaminopimelate + ATP = UDP-N-acetyl-alpha-D-muramoyl-L-alanyl-gamma-D-glutamyl-meso-2,6-diaminopimelate + ADP + phosphate + H(+). It functions in the pathway cell wall biogenesis; peptidoglycan biosynthesis. Its function is as follows. Catalyzes the addition of meso-diaminopimelic acid to the nucleotide precursor UDP-N-acetylmuramoyl-L-alanyl-D-glutamate (UMAG) in the biosynthesis of bacterial cell-wall peptidoglycan. The polypeptide is UDP-N-acetylmuramoyl-L-alanyl-D-glutamate--2,6-diaminopimelate ligase (Bacillus licheniformis (strain ATCC 14580 / DSM 13 / JCM 2505 / CCUG 7422 / NBRC 12200 / NCIMB 9375 / NCTC 10341 / NRRL NRS-1264 / Gibson 46)).